A 74-amino-acid polypeptide reads, in one-letter code: ATP synthase subunit c (74 aa).

2 consecutive transmembrane segments (helical) span residues 8 to 28 (FIGI…VSNI) and 52 to 72 (IGAG…MLLI).

This sequence belongs to the ATPase C chain family. F-type ATPases have 2 components, F(1) - the catalytic core - and F(0) - the membrane proton channel. F(1) has five subunits: alpha(3), beta(3), gamma(1), delta(1), epsilon(1). F(0) has three main subunits: a(1), b(2) and c(10-14). The alpha and beta chains form an alternating ring which encloses part of the gamma chain. F(1) is attached to F(0) by a central stalk formed by the gamma and epsilon chains, while a peripheral stalk is formed by the delta and b chains.

It is found in the cell inner membrane. Its function is as follows. F(1)F(0) ATP synthase produces ATP from ADP in the presence of a proton or sodium gradient. F-type ATPases consist of two structural domains, F(1) containing the extramembraneous catalytic core and F(0) containing the membrane proton channel, linked together by a central stalk and a peripheral stalk. During catalysis, ATP synthesis in the catalytic domain of F(1) is coupled via a rotary mechanism of the central stalk subunits to proton translocation. In terms of biological role, key component of the F(0) channel; it plays a direct role in translocation across the membrane. A homomeric c-ring of between 10-14 subunits forms the central stalk rotor element with the F(1) delta and epsilon subunits. This is ATP synthase subunit c from Rickettsia akari (strain Hartford).